We begin with the raw amino-acid sequence, 662 residues long: Sodium/glucose cotransporter 1 (662 aa).

The Extracellular segment spans residues 1–24 (MDSSTLSPLTTSTAAPLESYERIR). Residues 25–47 (NAADISVIVIYFLVVMAVGLWAM) traverse the membrane as a helical segment. The Cytoplasmic segment spans residues 48-66 (FSTNRGTVGGFFLAGRSMV). The helical transmembrane segment at 67 to 90 (WWPIGASLFASNIGSGHFVGLAGT) threads the bilayer. Topologically, residues 91-95 (GAASG) are extracellular. A helical membrane pass occupies residues 96–117 (IATGGFEWNALIMVVVLGWVFV). Residues 118–139 (PIYIRAGVVTMPEYLQKRFGGK) are Cytoplasmic-facing. Residues 140–169 (RIQIYLSILSLLLYIFTKISADIFSGAIFI) traverse the membrane as a helical segment. Residues 170–176 (QLTLGLD) lie on the Extracellular side of the membrane. The helical transmembrane segment at 177-193 (IYVAIIILLVITGLYTI) threads the bilayer. Topologically, residues 194–202 (TGGLAAVIY) are cytoplasmic. A helical transmembrane segment spans residues 203–221 (TDTLQTAIMMVGSVILTGF). The Extracellular portion of the chain corresponds to 222-275 (AFHEVGGYEAFTEKYMRAIPSQISYGNTSIPQKCYTPREDAFHIFRDAITGDIP). A glycan (N-linked (GlcNAc...) asparagine) is linked at Asn248. 5 cysteine pairs are disulfide-bonded: Cys255–Cys511, Cys255–Cys608, Cys345–Cys351, Cys355–Cys361, and Cys517–Cys522. The helical transmembrane segment at 276–295 (WPGLVFGMSILTLWYWCTDQ) threads the bilayer. Topologically, residues 296–309 (VIVQRCLSAKNLSH) are cytoplasmic. A helical membrane pass occupies residues 310-331 (VKAGCILCGYLKVMPMFLIVMM). The Extracellular portion of the chain corresponds to 332 to 375 (GMVSRILYTDKVACVVPSECERYCGTRVGCTNIAFPTLVVELMP). Residues 376–406 (NGLRGLMLSVMMASLMSSLTSIFNSASTLFT) form a helical membrane-spanning segment. Residues 407–422 (MDIYTKIRKKASEKEL) lie on the Cytoplasmic side of the membrane. A helical transmembrane segment spans residues 423–444 (MIAGRLFMLFLIGISIAWVPIV). At 445-451 (QSAQSGQ) the chain is on the extracellular side. A helical membrane pass occupies residues 452–477 (LFDYIQSITSYLGPPIAAVFLLAIFW). Gln457 contributes to the D-glucose binding site. Topologically, residues 478 to 481 (KRVN) are cytoplasmic. A helical membrane pass occupies residues 482-504 (EPGAFWGLVLGFLIGISRMITEF). At 505-525 (AYGTGSCMEPSNCPTIICGVH) the chain is on the extracellular side. Residues 526 to 547 (YLYFAIILFVISIITVVVVSLF) traverse the membrane as a helical segment. At 548–642 (TKPIPDVHLY…TSEHPLWRTV (95 aa)) the chain is on the cytoplasmic side. A helical membrane pass occupies residues 643–660 (VNINGVILLAVAVFCYAY). At 661–662 (FA) the chain is on the extracellular side.

This sequence belongs to the sodium:solute symporter (SSF) (TC 2.A.21) family. Post-translationally, N-glycosylation is not necessary for the cotransporter function. Found predominantly in intestine, renal cortex and in outer renal medulla.

It is found in the apical cell membrane. It catalyses the reaction D-glucose(out) + 2 Na(+)(out) = D-glucose(in) + 2 Na(+)(in). It carries out the reaction D-galactose(out) + 2 Na(+)(out) = D-galactose(in) + 2 Na(+)(in). Its activity is regulated as follows. Enhanced by the interaction with PDZK1IP1/MAP17; but unlike SLC5A2/SGLT2, PDZK1IP1 is not essential for SLC5A1 transporter activity. Possibly modulated by cholesterol binding. In terms of biological role, electrogenic Na(+)-coupled sugar symporter that actively transports D-glucose or D-galactose at the plasma membrane, with a Na(+) to sugar coupling ratio of 2:1. Transporter activity is driven by a transmembrane Na(+) electrochemical gradient set by the Na(+)/K(+) pump. Has a primary role in the transport of dietary monosaccharides from enterocytes to blood. Responsible for the absorption of D-glucose or D-galactose across the apical brush-border membrane of enterocytes, whereas basolateral exit is provided by GLUT2. Additionally, functions as a D-glucose sensor in enteroendocrine cells, triggering the secretion of the incretins GCG and GIP that control food intake and energy homeostasis. Together with SGLT2, functions in reabsorption of D-glucose from glomerular filtrate, playing a nonredundant role in the S3 segment of the proximal tubules. Transports D-glucose into endometrial epithelial cells, controlling glycogen synthesis and nutritional support for the embryo as well as the decidual transformation of endometrium prior to conception. Acts as a water channel enabling passive water transport in response to the osmotic gradient created upon sugar and Na(+) uptake. Has high water conductivity comparable to aquaporins and therefore is expected to play an important role in transepithelial water permeability, especially in the small intestine. In Oryctolagus cuniculus (Rabbit), this protein is Sodium/glucose cotransporter 1 (SLC5A1).